The sequence spans 265 residues: 3-methyl-2-oxobutanoate hydroxymethyltransferase (265 aa).

Positions 45 and 84 each coordinate Mg(2+). 3-methyl-2-oxobutanoate is bound by residues 45–46 (DS), Asp84, and Lys112. A Mg(2+)-binding site is contributed by Glu114. Glu181 functions as the Proton acceptor in the catalytic mechanism.

It belongs to the PanB family. Homodecamer; pentamer of dimers. Mg(2+) serves as cofactor.

It is found in the cytoplasm. The enzyme catalyses 3-methyl-2-oxobutanoate + (6R)-5,10-methylene-5,6,7,8-tetrahydrofolate + H2O = 2-dehydropantoate + (6S)-5,6,7,8-tetrahydrofolate. Its pathway is cofactor biosynthesis; (R)-pantothenate biosynthesis; (R)-pantoate from 3-methyl-2-oxobutanoate: step 1/2. Its function is as follows. Catalyzes the reversible reaction in which hydroxymethyl group from 5,10-methylenetetrahydrofolate is transferred onto alpha-ketoisovalerate to form ketopantoate. The protein is 3-methyl-2-oxobutanoate hydroxymethyltransferase of Pectobacterium carotovorum subsp. carotovorum (strain PC1).